The sequence spans 350 residues: Phenylalanine--tRNA ligase alpha subunit (350 aa).

Glu-257 is a binding site for Mg(2+).

This sequence belongs to the class-II aminoacyl-tRNA synthetase family. Phe-tRNA synthetase alpha subunit type 1 subfamily. In terms of assembly, tetramer of two alpha and two beta subunits. Mg(2+) serves as cofactor.

The protein localises to the cytoplasm. It catalyses the reaction tRNA(Phe) + L-phenylalanine + ATP = L-phenylalanyl-tRNA(Phe) + AMP + diphosphate + H(+). The protein is Phenylalanine--tRNA ligase alpha subunit of Listeria monocytogenes serotype 4b (strain CLIP80459).